The following is an 89-amino-acid chain: Small ribosomal subunit protein uS15 (89 aa).

The protein belongs to the universal ribosomal protein uS15 family. As to quaternary structure, part of the 30S ribosomal subunit. Forms a bridge to the 50S subunit in the 70S ribosome, contacting the 23S rRNA.

Its function is as follows. One of the primary rRNA binding proteins, it binds directly to 16S rRNA where it helps nucleate assembly of the platform of the 30S subunit by binding and bridging several RNA helices of the 16S rRNA. Forms an intersubunit bridge (bridge B4) with the 23S rRNA of the 50S subunit in the ribosome. This chain is Small ribosomal subunit protein uS15, found in Desulfosudis oleivorans (strain DSM 6200 / JCM 39069 / Hxd3) (Desulfococcus oleovorans).